The following is a 312-amino-acid chain: Apulose-4-phosphate transketolase subunit B (312 aa).

It belongs to the transketolase family. Probable heterodimer composed of AptA and AptB. Requires thiamine diphosphate as cofactor.

The enzyme catalyses apulose 4-phosphate + D-glyceraldehyde 3-phosphate = D-xylulose 5-phosphate + dihydroxyacetone phosphate. It functions in the pathway carbohydrate metabolism. Functionally, involved in catabolism of D-apiose. Catalyzes the transfer of the glycolaldehyde group from apulose-4-phosphate to D-glyceraldehyde 3-phosphate, generating dihydroxyacetone phosphate and D-xylulose-5-phosphate. In Phocaeicola vulgatus (strain ATCC 8482 / DSM 1447 / JCM 5826 / CCUG 4940 / NBRC 14291 / NCTC 11154) (Bacteroides vulgatus), this protein is Apulose-4-phosphate transketolase subunit B.